Reading from the N-terminus, the 188-residue chain is Ribosome biogenesis protein RLP24 (188 aa).

Residues 140–188 (ELRRMQEAGEDDDDEDMSEMEVSEEEESEEEREKVEIALKSKSKRKMRA) are disordered. Acidic residues predominate over residues 147–169 (AGEDDDDEDMSEMEVSEEEESEE).

This sequence belongs to the eukaryotic ribosomal protein eL24 family. As to quaternary structure, associated with nucleolar and cytoplasmic pre-60S particles. At the end of biogenesis it dissociates from cytoplasmic pre-60S particles and is likely to be exchanged for its ribosomal homolog, RPL24.

It localises to the cytoplasm. The protein localises to the nucleus. Involved in the biogenesis of the 60S ribosomal subunit. Ensures the docking of YALI0_B00990g/NOG1 to pre-60S particles. Activates and recruits ATPase AFG2 to cytoplasmic pre-60S ribosomal particles. The protein is Ribosome biogenesis protein RLP24 (RLP24) of Yarrowia lipolytica (strain CLIB 122 / E 150) (Yeast).